Reading from the N-terminus, the 735-residue chain is Phosphoribosylformylglycinamidine synthase subunit PurL (735 aa).

The active site involves histidine 44. ATP is bound by residues tyrosine 47 and lysine 86. Glutamate 88 is a Mg(2+) binding site. Residues 89-92 (SHNH) and arginine 111 contribute to the substrate site. Residue histidine 90 is the Proton acceptor of the active site. Position 112 (aspartate 112) interacts with Mg(2+). Glutamine 240 provides a ligand contact to substrate. A Mg(2+)-binding site is contributed by aspartate 268. 312 to 314 (ESQ) contacts substrate. ATP is bound by residues aspartate 496 and glycine 533. Residue asparagine 534 participates in Mg(2+) binding. Serine 536 is a binding site for substrate.

It belongs to the FGAMS family. As to quaternary structure, monomer. Part of the FGAM synthase complex composed of 1 PurL, 1 PurQ and 2 PurS subunits.

It is found in the cytoplasm. The catalysed reaction is N(2)-formyl-N(1)-(5-phospho-beta-D-ribosyl)glycinamide + L-glutamine + ATP + H2O = 2-formamido-N(1)-(5-O-phospho-beta-D-ribosyl)acetamidine + L-glutamate + ADP + phosphate + H(+). Its pathway is purine metabolism; IMP biosynthesis via de novo pathway; 5-amino-1-(5-phospho-D-ribosyl)imidazole from N(2)-formyl-N(1)-(5-phospho-D-ribosyl)glycinamide: step 1/2. Part of the phosphoribosylformylglycinamidine synthase complex involved in the purines biosynthetic pathway. Catalyzes the ATP-dependent conversion of formylglycinamide ribonucleotide (FGAR) and glutamine to yield formylglycinamidine ribonucleotide (FGAM) and glutamate. The FGAM synthase complex is composed of three subunits. PurQ produces an ammonia molecule by converting glutamine to glutamate. PurL transfers the ammonia molecule to FGAR to form FGAM in an ATP-dependent manner. PurS interacts with PurQ and PurL and is thought to assist in the transfer of the ammonia molecule from PurQ to PurL. The sequence is that of Phosphoribosylformylglycinamidine synthase subunit PurL from Nitratiruptor sp. (strain SB155-2).